The following is a 378-amino-acid chain: Odorant receptor 45a (378 aa).

Residues 1–30 (MDASYFAVQRRALEIVGFDPSTPQLSLKHP) lie on the Cytoplasmic side of the membrane. Residues 31-51 (IWAGILILSLISHNWPMVVYA) traverse the membrane as a helical segment. Topologically, residues 52 to 129 (LQDLSDLTRL…RYVARSFRNA (78 aa)) are extracellular. Residues 130–150 (AYGVICASAIAPMLLGLWGYV) form a helical membrane-spanning segment. Residues 151 to 173 (ETGVFTPTTPMEFNFWLDERKPH) lie on the Cytoplasmic side of the membrane. A helical transmembrane segment spans residues 174–194 (FYWPIYVWGVLGVAAAAWLAI). Residues 195-197 (ATD) are Extracellular-facing. A helical transmembrane segment spans residues 198-218 (TLFSWLTHNVVIQFQLLELVL). Residues 219–249 (EEKDLNGGDSRLTGFVSRHRIALDLAKELSS) lie on the Cytoplasmic side of the membrane. A helical transmembrane segment spans residues 250–270 (IFGEIVFVKYMLSYLQLCMLA). The Extracellular portion of the chain corresponds to 271 to 285 (FRFSRSGWSAQVPFR). Residues 286–306 (ATFLVAIIIQLSSYCYGGEYI) form a helical membrane-spanning segment. At 307-342 (KQQSLAIAQAVYGQINWPEMTPKKRRLWQMVIMRAQ) the chain is on the cytoplasmic side. Residues 343 to 363 (RPAKIFGFMFVVDLPLLLWVI) traverse the membrane as a helical segment. The Extracellular portion of the chain corresponds to 364 to 378 (RTAGSFLAMLRTFER).

Belongs to the insect chemoreceptor superfamily. Heteromeric odorant receptor channel (TC 1.A.69) family. Or1a subfamily. Interacts with Orco. Complexes exist early in the endomembrane system in olfactory sensory neurons (OSNs), coupling these complexes to the conserved ciliary trafficking pathway.

It is found in the cell membrane. Functionally, odorant receptor which mediates acceptance or avoidance behavior, depending on its substrates. The odorant receptor repertoire encodes a large collection of odor stimuli that vary widely in identity, intensity, and duration. May form a complex with Orco to form odorant-sensing units, providing sensitive and prolonged odorant signaling and calcium permeability. Involved in the behavioral responses to hexanol, pentyl acetate, benzyl acetate, and 2-heptanone. The protein is Odorant receptor 45a (Or45a) of Drosophila melanogaster (Fruit fly).